A 121-amino-acid chain; its full sequence is Small ribosomal subunit protein uS13 (121 aa).

The interval 93–121 (RGLPMRGQRTRTNARTRKGPRKAAQSLKK) is disordered.

The protein belongs to the universal ribosomal protein uS13 family. Part of the 30S ribosomal subunit. Forms a loose heterodimer with protein S19. Forms two bridges to the 50S subunit in the 70S ribosome.

In terms of biological role, located at the top of the head of the 30S subunit, it contacts several helices of the 16S rRNA. In the 70S ribosome it contacts the 23S rRNA (bridge B1a) and protein L5 of the 50S subunit (bridge B1b), connecting the 2 subunits; these bridges are implicated in subunit movement. Contacts the tRNAs in the A and P-sites. This Albidiferax ferrireducens (strain ATCC BAA-621 / DSM 15236 / T118) (Rhodoferax ferrireducens) protein is Small ribosomal subunit protein uS13.